The following is a 212-amino-acid chain: uncharacterized protein (212 aa).

Residues 1 to 88 (MAEEQKIALE…PAPAKPASAS (88 aa)) form a disordered region. Phosphoserine is present on Ser13. The span at 23 to 41 (ADTPAPAPAEIPAPAPAPT) shows a compositional bias: pro residues. Residues 45 to 54 (VTKDVAEEKI) show a composition bias toward basic and acidic residues.

Belongs to the remorin family.

It localises to the cell membrane. This is an uncharacterized protein from Arabidopsis thaliana (Mouse-ear cress).